Consider the following 177-residue polypeptide: Large ribosomal subunit protein uL6 (177 aa).

Belongs to the universal ribosomal protein uL6 family. In terms of assembly, part of the 50S ribosomal subunit.

Functionally, this protein binds to the 23S rRNA, and is important in its secondary structure. It is located near the subunit interface in the base of the L7/L12 stalk, and near the tRNA binding site of the peptidyltransferase center. The sequence is that of Large ribosomal subunit protein uL6 from Bartonella quintana (strain Toulouse) (Rochalimaea quintana).